Consider the following 919-residue polypeptide: Alpha-amylase (919 aa).

An N-terminal signal peptide occupies residues 1-33 (MPATRRTARVRRVAAVTVTALAAALLPPLAARA). Residues Asn182 and Asp281 each contribute to the Ca(2+) site. The active-site Nucleophile is the Asp312. His316 serves as a coordination point for Ca(2+). Glu346 functions as the Proton donor in the catalytic mechanism. The interval 704–729 (ASGRLHHRHPARRGGAHRRLPGPRGR) is disordered. Positions 707–724 (RLHHRHPARRGGAHRRLP) are enriched in basic residues.

Belongs to the glycosyl hydrolase 13 family. In terms of assembly, monomer. The cofactor is Ca(2+).

It localises to the secreted. The catalysed reaction is Endohydrolysis of (1-&gt;4)-alpha-D-glucosidic linkages in polysaccharides containing three or more (1-&gt;4)-alpha-linked D-glucose units.. In Streptomyces lividans, this protein is Alpha-amylase (amy).